The sequence spans 70 residues: Large ribosomal subunit protein bL31c (70 aa).

This sequence belongs to the bacterial ribosomal protein bL31 family. Type A subfamily. As to quaternary structure, part of the 50S ribosomal subunit.

It localises to the plastid. Its subcellular location is the chloroplast. Binds the 23S rRNA. This chain is Large ribosomal subunit protein bL31c, found in Emiliania huxleyi (Coccolithophore).